The following is a 141-amino-acid chain: MTIIIGADAHGVELKEVIRQHLTSLGKEIIDLTDTSKDFVDNTLAIVAKVNQKEDNLGIMVDAYGVGPFMVATKVKGMIAAEVSDERSAYMTRAHNNARMITLGSEIVGPGVAKHIVEGFVDGTYDAGRHQIRVDMLNKMC.

The protein belongs to the LacAB/RpiB family. Heteromultimeric protein consisting of LacA and LacB.

The enzyme catalyses aldehydo-D-galactose 6-phosphate = keto-D-tagatose 6-phosphate. It participates in carbohydrate metabolism; D-galactose 6-phosphate degradation; D-tagatose 6-phosphate from D-galactose 6-phosphate: step 1/1. The chain is Galactose-6-phosphate isomerase subunit LacA from Streptococcus agalactiae serotype Ia (strain ATCC 27591 / A909 / CDC SS700).